We begin with the raw amino-acid sequence, 99 residues long: Integration host factor subunit alpha (99 aa).

Positions 51-71 (NFDLRDKNQRPGRNPKTGEDI) are disordered.

The protein belongs to the bacterial histone-like protein family. In terms of assembly, heterodimer of an alpha and a beta chain.

In terms of biological role, this protein is one of the two subunits of integration host factor, a specific DNA-binding protein that functions in genetic recombination as well as in transcriptional and translational control. The protein is Integration host factor subunit alpha (ihfA) of Dickeya dadantii (strain 3937) (Erwinia chrysanthemi (strain 3937)).